The following is a 591-amino-acid chain: Fanconi anemia group C protein homolog (591 aa).

As to quaternary structure, belongs to the multisubunit FA complex composed of FANCA, FANCB, FANCC, FANCE, FANCF, FANCG, FANCL/PHF9 and FANCM. This complex may also include HSP70. Interacts with ZBTB32. Upon IFNG induction, interacts with STAT1. Interacts with CDK1. Interacts with EIF2AK2. Ubiquitous.

Its subcellular location is the nucleus. The protein resides in the cytoplasm. Its function is as follows. DNA repair protein that may operate in a postreplication repair or a cell cycle checkpoint function. May be implicated in interstrand DNA cross-link repair and in the maintenance of normal chromosome stability. Upon IFNG induction, may facilitate STAT1 activation by recruiting STAT1 to IFNGR1. This is Fanconi anemia group C protein homolog (Fancc) from Mus musculus (Mouse).